We begin with the raw amino-acid sequence, 160 residues long: MNFNHFDEQGHAVMVDVSSKQETMRTATAAADVIMSAELLAAIARKSVSKGDVLGVARLAGIMAAKKTDDLIPLSHPLSLHSVSIEFDQDPAACRIQARCTVRAFERTGVEMEAMTGAAVAALTIYDMCKGTDKSISIANIRLLYKEGGKSGLYRREEAA.

Substrate is bound by residues 74 to 76 (LSH) and 112 to 113 (ME). Residue D127 is part of the active site.

Belongs to the MoaC family. Homohexamer; trimer of dimers.

The catalysed reaction is (8S)-3',8-cyclo-7,8-dihydroguanosine 5'-triphosphate = cyclic pyranopterin phosphate + diphosphate. It participates in cofactor biosynthesis; molybdopterin biosynthesis. Functionally, catalyzes the conversion of (8S)-3',8-cyclo-7,8-dihydroguanosine 5'-triphosphate to cyclic pyranopterin monophosphate (cPMP). The protein is Cyclic pyranopterin monophosphate synthase of Trichlorobacter lovleyi (strain ATCC BAA-1151 / DSM 17278 / SZ) (Geobacter lovleyi).